We begin with the raw amino-acid sequence, 162 residues long: Phosphopantetheine adenylyltransferase (162 aa).

S11 lines the substrate pocket. ATP-binding positions include 11-12 (SF) and H19. Substrate-binding residues include K43, L75, and R89. ATP is bound by residues 90 to 92 (GLR), E100, and 125 to 131 (FSYISSS).

The protein belongs to the bacterial CoaD family. Homohexamer. Mg(2+) is required as a cofactor.

Its subcellular location is the cytoplasm. The catalysed reaction is (R)-4'-phosphopantetheine + ATP + H(+) = 3'-dephospho-CoA + diphosphate. Its pathway is cofactor biosynthesis; coenzyme A biosynthesis; CoA from (R)-pantothenate: step 4/5. Reversibly transfers an adenylyl group from ATP to 4'-phosphopantetheine, yielding dephospho-CoA (dPCoA) and pyrophosphate. This chain is Phosphopantetheine adenylyltransferase, found in Petrotoga mobilis (strain DSM 10674 / SJ95).